We begin with the raw amino-acid sequence, 337 residues long: Membrane-spanning 4-domains subfamily A member 18 (337 aa).

Residues 101–121 (LGTTDLQTQPGGPQNPPTCAP) are disordered. The next 4 helical transmembrane spans lie at 155–175 (LGAIQILIGLTHIFTAINPSL), 183–203 (AISGYLVWGGIFFIISGSLSV), 220–240 (MNVVSAIVSLAGVLLLLVDLI), and 252–272 (GGLLPFVLLEFCLTCVVSHFG).

The protein belongs to the MS4A family.

The protein resides in the membrane. The chain is Membrane-spanning 4-domains subfamily A member 18 (MS4A18) from Bos taurus (Bovine).